Here is a 219-residue protein sequence, read N- to C-terminus: Ribose-5-phosphate isomerase A (219 aa).

Substrate is bound by residues 28-31 (TGST), 81-84 (DGAD), and 94-97 (KGGG). E103 serves as the catalytic Proton acceptor. Position 121 (K121) interacts with substrate.

It belongs to the ribose 5-phosphate isomerase family. As to quaternary structure, homodimer.

The catalysed reaction is aldehydo-D-ribose 5-phosphate = D-ribulose 5-phosphate. Its pathway is carbohydrate degradation; pentose phosphate pathway; D-ribose 5-phosphate from D-ribulose 5-phosphate (non-oxidative stage): step 1/1. Its function is as follows. Catalyzes the reversible conversion of ribose-5-phosphate to ribulose 5-phosphate. The protein is Ribose-5-phosphate isomerase A of Enterobacter cloacae.